Here is a 252-residue protein sequence, read N- to C-terminus: Ciliogenesis and planar polarity effector 2 (252 aa).

The interval 46–252 (QMNVDLVRYK…LRETSSEIIV (207 aa)) is small GTPase-like. GTP is bound by residues 62 to 67 (TGVGKS) and 173 to 176 (TKFD).

Belongs to the small GTPase superfamily. Rab family.

It is found in the cytoplasm. Its subcellular location is the cytoskeleton. The protein localises to the cilium basal body. Potential effector of the planar cell polarity signaling pathway. Plays a role in targeted membrane trafficking most probably at the level of vesicle fusion with membranes. Involved in cilium biogenesis by regulating the transport of cargo proteins to the basal body and to the apical tips of cilia. More generally involved in exocytosis in secretory cells. The protein is Ciliogenesis and planar polarity effector 2 (cplane2) of Danio rerio (Zebrafish).